A 799-amino-acid polypeptide reads, in one-letter code: Probable inorganic carbon transporter subunit DabA (799 aa).

Zn(2+) contacts are provided by Cys303, Asp305, His479, and Cys494. Positions 574 to 598 are disordered; sequence AGAAAERSEALNGADPDKGVSETAS.

This sequence belongs to the inorganic carbon transporter (TC 9.A.2) DabA family. As to quaternary structure, forms a complex with DabB. Requires Zn(2+) as cofactor.

It is found in the cell membrane. Part of an energy-coupled inorganic carbon pump. This chain is Probable inorganic carbon transporter subunit DabA, found in Natronomonas pharaonis (strain ATCC 35678 / DSM 2160 / CIP 103997 / JCM 8858 / NBRC 14720 / NCIMB 2260 / Gabara) (Halobacterium pharaonis).